Reading from the N-terminus, the 323-residue chain is Transmembrane protein 59 (323 aa).

Residues 1–35 form the signal peptide; that stretch reads MAAPKGSLWVRTQLGLPPLLLLTMALAGGSGTASA. The Extracellular segment spans residues 36–238; sequence EAFDSVLGDT…GFLRCLSLNS (203 aa). N-linked (GlcNAc...) asparagine glycosylation occurs at Asn90. A helical transmembrane segment spans residues 239-259; it reads GWILTTTLVLSVMVLLWICCA. Residues 260–323 are Cytoplasmic-facing; that stretch reads TVATAVEQYV…TKVNLAHSEI (64 aa). An ATG16L1-binding motif motif is present at residues 263–281; the sequence is TAVEQYVPSEKLSIYGDLE. Phosphothreonine is present on Thr303.

This sequence belongs to the TMEM59 family. In terms of assembly, interacts with ATG16L1 (via WD repeats). N-glycosylated.

The protein localises to the late endosome membrane. It localises to the lysosome membrane. The protein resides in the cell membrane. Its subcellular location is the golgi apparatus membrane. Its function is as follows. Acts as a regulator of autophagy in response to S.aureus infection by promoting activation of LC3 (MAP1LC3A, MAP1LC3B or MAP1LC3C). Acts by interacting with ATG16L1, leading to promote a functional complex between LC3 and ATG16L1 and promoting LC3 lipidation and subsequent activation of autophagy. Modulates the O-glycosylation and complex N-glycosylation steps occurring during the Golgi maturation of several proteins such as APP, BACE1, SEAP or PRNP. Inhibits APP transport to the cell surface and further shedding. The sequence is that of Transmembrane protein 59 (TMEM59) from Homo sapiens (Human).